A 409-amino-acid polypeptide reads, in one-letter code: Tryptophan synthase beta chain (409 aa).

Lysine 95 is subject to N6-(pyridoxal phosphate)lysine.

The protein belongs to the TrpB family. As to quaternary structure, tetramer of two alpha and two beta chains. The cofactor is pyridoxal 5'-phosphate.

The catalysed reaction is (1S,2R)-1-C-(indol-3-yl)glycerol 3-phosphate + L-serine = D-glyceraldehyde 3-phosphate + L-tryptophan + H2O. Its pathway is amino-acid biosynthesis; L-tryptophan biosynthesis; L-tryptophan from chorismate: step 5/5. Its function is as follows. The beta subunit is responsible for the synthesis of L-tryptophan from indole and L-serine. The sequence is that of Tryptophan synthase beta chain from Pseudomonas syringae pv. tomato (strain ATCC BAA-871 / DC3000).